The primary structure comprises 256 residues: CD209 antigen-like protein 2 (256 aa).

At 1-50 (MSDSKEPRAQPLGLLEEEELITSSMNFFPRDFGFRQTRGYKSLAGCLGHA) the chain is on the cytoplasmic side. The Endocytosis signal motif lies at 14–15 (LL). A helical; Signal-anchor for type II membrane protein transmembrane segment spans residues 51 to 71 (PLVLPLLFFTLFTGLLVAILV). The Extracellular segment spans residues 72 to 240 (QVSKNPSSQR…KSAASCSRDE (169 aa)). Cystine bridges form between Cys108–Cys119, Cys136–Cys229, and Cys208–Cys221. The 117-residue stretch at 114–230 (FFQGNCYFIS…CSAAKFWICK (117 aa)) folds into the C-type lectin domain. Ca(2+)-binding residues include Glu199, Asn201, Ile203, Glu206, Asn217, and Asp218.

As to expression, predominantly expressed in liver and axillary lymph nodes. At very low levels also found in other tissues.

The protein resides in the membrane. In terms of biological role, probable pathogen-recognition receptor involved in peripheral immune surveillance in liver. May mediate the endocytosis of pathogens which are subsequently degraded in lysosomal compartments. Probably recognizes in a calcium-dependent manner high mannose N-linked oligosaccharides in a variety of pathogen antigens. Is a receptor for ICAM3, probably by binding to mannose-like carbohydrates. The chain is CD209 antigen-like protein 2 (CD209L2) from Macaca mulatta (Rhesus macaque).